The following is a 157-amino-acid chain: Transcriptional repressor NrdR (157 aa).

A zinc finger lies at Cys3–Cys34. Residues Leu49–Asp139 form the ATP-cone domain.

Belongs to the NrdR family. The cofactor is Zn(2+).

In terms of biological role, negatively regulates transcription of bacterial ribonucleotide reductase nrd genes and operons by binding to NrdR-boxes. The sequence is that of Transcriptional repressor NrdR from Granulibacter bethesdensis (strain ATCC BAA-1260 / CGDNIH1).